Reading from the N-terminus, the 370-residue chain is Glutamate 5-kinase (370 aa).

K17 serves as a coordination point for ATP. Substrate is bound by residues S56, D143, and N155. 175-176 (SD) is an ATP binding site. The PUA domain maps to 280–357 (KGEITVDAGA…DEIEGILGYP (78 aa)).

This sequence belongs to the glutamate 5-kinase family.

Its subcellular location is the cytoplasm. It carries out the reaction L-glutamate + ATP = L-glutamyl 5-phosphate + ADP. It functions in the pathway amino-acid biosynthesis; L-proline biosynthesis; L-glutamate 5-semialdehyde from L-glutamate: step 1/2. Catalyzes the transfer of a phosphate group to glutamate to form L-glutamate 5-phosphate. This is Glutamate 5-kinase from Paracoccus denitrificans (strain Pd 1222).